A 135-amino-acid chain; its full sequence is 6-pyruvoyl tetrahydrobiopterin synthase (135 aa).

Position 17 (His17) interacts with Zn(2+). Catalysis depends on Cys36, which acts as the Proton acceptor. Positions 40 and 42 each coordinate Zn(2+). Active-site charge relay system residues include His81 and Glu124.

The protein belongs to the PTPS family. Homohexamer formed of two homotrimers in a head to head fashion. Zn(2+) is required as a cofactor.

It carries out the reaction 7,8-dihydroneopterin 3'-triphosphate = 6-pyruvoyl-5,6,7,8-tetrahydropterin + triphosphate + H(+). The protein operates within cofactor biosynthesis; tetrahydrobiopterin biosynthesis; tetrahydrobiopterin from 7,8-dihydroneopterin triphosphate: step 1/3. Involved in the biosynthesis of tetrahydrobiopterin, an essential cofactor of aromatic amino acid hydroxylases. Catalyzes the transformation of 7,8-dihydroneopterin triphosphate into 6-pyruvoyl tetrahydropterin. The chain is 6-pyruvoyl tetrahydrobiopterin synthase (ptsA) from Dictyostelium discoideum (Social amoeba).